The sequence spans 482 residues: UDP-N-acetylmuramate--L-alanine ligase (482 aa).

Residue 115 to 121 (GTHGKTT) participates in ATP binding.

Belongs to the MurCDEF family.

It is found in the cytoplasm. It catalyses the reaction UDP-N-acetyl-alpha-D-muramate + L-alanine + ATP = UDP-N-acetyl-alpha-D-muramoyl-L-alanine + ADP + phosphate + H(+). It functions in the pathway cell wall biogenesis; peptidoglycan biosynthesis. Cell wall formation. This Rhodospirillum centenum (strain ATCC 51521 / SW) protein is UDP-N-acetylmuramate--L-alanine ligase.